The sequence spans 474 residues: Solute carrier family 49 member A3 (474 aa).

The disordered stretch occupies residues 1 to 20; it reads MEGESAETEPLIQSSSAADR. Transmembrane regions (helical) follow at residues 38–58, 69–89, 105–126, 134–154, 175–195, 201–221, 258–278, 290–310, 326–346, 349–369, 388–408, and 428–448; these read WFIL…WLTF, LCVS…AAVV, CSLI…CGVL, VFAV…LVIF, LASM…PLIV, LFLL…LATL, WILL…STLL, GFAG…AFLL, ICMC…QLPA, VLLV…YPVG, LIFT…QALA, and VPVL…VVFF.

The protein belongs to the major facilitator superfamily.

Its subcellular location is the membrane. This chain is Solute carrier family 49 member A3 (slc49a3), found in Danio rerio (Zebrafish).